The following is a 359-amino-acid chain: Peptide methionine sulfoxide reductase MsrA/MsrB (359 aa).

Residues 36 to 189 are peptide methionine sulfoxide reductase A; that stretch reads RVIYLAGGCF…PGGYCHIDLK (154 aa). The active site involves Cys-44. Residues 206–329 enclose the MsrB domain; that stretch reads DEVLKKKLTK…NSAALRFIPL (124 aa). Catalysis depends on Cys-318, which acts as the Nucleophile.

It in the N-terminal section; belongs to the MsrA Met sulfoxide reductase family. The protein in the C-terminal section; belongs to the MsrB Met sulfoxide reductase family.

The catalysed reaction is L-methionyl-[protein] + [thioredoxin]-disulfide + H2O = L-methionyl-(S)-S-oxide-[protein] + [thioredoxin]-dithiol. It carries out the reaction [thioredoxin]-disulfide + L-methionine + H2O = L-methionine (S)-S-oxide + [thioredoxin]-dithiol. It catalyses the reaction L-methionyl-[protein] + [thioredoxin]-disulfide + H2O = L-methionyl-(R)-S-oxide-[protein] + [thioredoxin]-dithiol. Its function is as follows. Has an important function as a repair enzyme for proteins that have been inactivated by oxidation. Catalyzes the reversible oxidation-reduction of methionine sulfoxide in proteins to methionine. The protein is Peptide methionine sulfoxide reductase MsrA/MsrB (msrAB) of Helicobacter pylori (strain J99 / ATCC 700824) (Campylobacter pylori J99).